Consider the following 805-residue polypeptide: Ribosome biogenesis protein ERB1 (805 aa).

Positions 1–105 are disordered; that stretch reads MVKGRKSQKA…SDFSEDDTKS (105 aa). A compositionally biased stretch (basic and acidic residues) spans 8-22; it reads QKADKVTKAKKRVAD. Residues 23–75 are compositionally biased toward acidic residues; the sequence is EVDESESEPELQVEGLIDAEAESEDDESFESAEENASAEEDEEDEEDEEDSDA. The required for interaction with NOP7 stretch occupies residues 264 to 382; sequence RFVPSKNEAK…LRKVPGYTES (119 aa). Positions 382-418 are required for interaction with YTM1; the sequence is SVRERFERSLDLYLAPRMRKNKLNIDPESLIPELPSP. 7 WD repeats span residues 434-473, 482-522, 590-632, 635-673, 676-715, 719-758, and 775-805; these read GHEG…EVYR, NPED…YDIE, VCKK…TQSP, KSKG…LVKK, PGAR…TPYK, YHDK…DMMK, and GHLG…MWTT.

This sequence belongs to the WD repeat BOP1/ERB1 family. As to quaternary structure, component of the NOP7 complex, composed of ERB1, NOP7 and YTM1. The complex is held together by ERB1, which interacts with NOP7 via its N-terminal domain and with YTM1 via a high-affinity interaction between the seven-bladed beta-propeller domains of the 2 proteins. The NOP7 complex associates with the 66S pre-ribosome.

The protein localises to the nucleus. The protein resides in the nucleolus. It is found in the nucleoplasm. Functionally, component of the NOP7 complex, which is required for maturation of the 25S and 5.8S ribosomal RNAs and formation of the 60S ribosome. The chain is Ribosome biogenesis protein ERB1 from Candida glabrata (strain ATCC 2001 / BCRC 20586 / JCM 3761 / NBRC 0622 / NRRL Y-65 / CBS 138) (Yeast).